The primary structure comprises 816 residues: Leucine--tRNA ligase (816 aa).

A 'HIGH' region motif is present at residues 46–56 (PYPSGALHMGH). Residues 638 to 642 (KMSKS) carry the 'KMSKS' region motif. Lysine 641 is a binding site for ATP.

The protein belongs to the class-I aminoacyl-tRNA synthetase family.

The protein localises to the cytoplasm. It catalyses the reaction tRNA(Leu) + L-leucine + ATP = L-leucyl-tRNA(Leu) + AMP + diphosphate. The polypeptide is Leucine--tRNA ligase (Xanthomonas campestris pv. campestris (strain ATCC 33913 / DSM 3586 / NCPPB 528 / LMG 568 / P 25)).